Reading from the N-terminus, the 294-residue chain is Lipoyl synthase (294 aa).

The [4Fe-4S] cluster site is built by Cys35, Cys40, Cys46, Cys61, Cys65, Cys68, and Ser273. Residues 47–262 (FRQRQATFLI…REQALSMGFE (216 aa)) enclose the Radical SAM core domain.

Belongs to the radical SAM superfamily. Lipoyl synthase family. [4Fe-4S] cluster is required as a cofactor.

It localises to the cytoplasm. It catalyses the reaction [[Fe-S] cluster scaffold protein carrying a second [4Fe-4S](2+) cluster] + N(6)-octanoyl-L-lysyl-[protein] + 2 oxidized [2Fe-2S]-[ferredoxin] + 2 S-adenosyl-L-methionine + 4 H(+) = [[Fe-S] cluster scaffold protein] + N(6)-[(R)-dihydrolipoyl]-L-lysyl-[protein] + 4 Fe(3+) + 2 hydrogen sulfide + 2 5'-deoxyadenosine + 2 L-methionine + 2 reduced [2Fe-2S]-[ferredoxin]. Its pathway is protein modification; protein lipoylation via endogenous pathway; protein N(6)-(lipoyl)lysine from octanoyl-[acyl-carrier-protein]: step 2/2. Functionally, catalyzes the radical-mediated insertion of two sulfur atoms into the C-6 and C-8 positions of the octanoyl moiety bound to the lipoyl domains of lipoate-dependent enzymes, thereby converting the octanoylated domains into lipoylated derivatives. This chain is Lipoyl synthase, found in Geotalea daltonii (strain DSM 22248 / JCM 15807 / FRC-32) (Geobacter daltonii).